Here is a 467-residue protein sequence, read N- to C-terminus: Transcription factor TGAL7 (467 aa).

Residues 1–10 (MGGSREEDRQ) are compositionally biased toward basic and acidic residues. Disordered stretches follow at residues 1-42 (MGGS…KESS) and 105-184 (QLQV…KTLR). A compositionally biased stretch (low complexity) spans 25 to 41 (SSSPTTMIASSSMSKES). The span at 120 to 129 (QGGQKINSSV) shows a compositional bias: polar residues. Residues 145–157 (KDNKNSSLIKKEG) are compositionally biased toward basic and acidic residues. Residues 158-168 (SSSGKGATTSN) are compositionally biased toward polar residues. Residues 169–182 (DPEREGRRTLDPKT) show a composition bias toward basic and acidic residues. One can recognise a bZIP domain in the interval 179–223 (DPKTLRRLAQNREAARKSRLRKKAYIQQLESSRIRLSQLEQQVHV). The interval 181 to 201 (KTLRRLAQNREAARKSRLRKK) is basic motif. The interval 207–221 (LESSRIRLSQLEQQV) is leucine-zipper. The 212-residue stretch at 247–458 (ASLFDLEYGR…RALSTLWVAR (212 aa)) folds into the DOG1 domain.

It belongs to the bZIP family. As to quaternary structure, interacts with NPR5/NH4, NH5.1 and NH5.2.

The protein resides in the nucleus. In terms of biological role, transcriptional regulator involved in defense response. This Oryza sativa subsp. japonica (Rice) protein is Transcription factor TGAL7.